Reading from the N-terminus, the 250-residue chain is Peptidyl-tRNA hydrolase (250 aa).

Position 14 (Tyr14) interacts with tRNA. Residue His19 is the Proton acceptor of the active site. TRNA contacts are provided by Phe64, Asn66, and Asn112. A disordered region spans residues 192 to 250 (MGDGNQRPGGVKTDPAQLEKAPPKAQSHIRQARQNQKKPNIPESGPMAEMLKKLLGKKD). The span at 219–229 (HIRQARQNQKK) shows a compositional bias: polar residues. Positions 241–250 (MLKKLLGKKD) are enriched in basic and acidic residues.

This sequence belongs to the PTH family. In terms of assembly, monomer.

It localises to the cytoplasm. It carries out the reaction an N-acyl-L-alpha-aminoacyl-tRNA + H2O = an N-acyl-L-amino acid + a tRNA + H(+). In terms of biological role, hydrolyzes ribosome-free peptidyl-tRNAs (with 1 or more amino acids incorporated), which drop off the ribosome during protein synthesis, or as a result of ribosome stalling. Functionally, catalyzes the release of premature peptidyl moieties from peptidyl-tRNA molecules trapped in stalled 50S ribosomal subunits, and thus maintains levels of free tRNAs and 50S ribosomes. In Brucella abortus (strain 2308), this protein is Peptidyl-tRNA hydrolase.